The following is a 415-amino-acid chain: Methylmalonic aciduria type A homolog, mitochondrial (415 aa).

Residues 1–62 (MTISTLLLSP…LLSDGFRRTL (62 aa)) constitute a mitochondrion transit peptide. Residues 147–155 (GPPGAGKST), aspartate 289, and 325–327 (SAR) each bind GTP.

It belongs to the SIMIBI class G3E GTPase family. ArgK/MeaB subfamily. As to quaternary structure, homodimer. Interacts with MMUT (the apoenzyme form); the interaction is GTP dependent.

Its subcellular location is the mitochondrion. It localises to the cytoplasm. It carries out the reaction GTP + H2O = GDP + phosphate + H(+). GTPase activity is stimulated by MMUT. GTPase, binds and hydrolyzes GTP. Involved in intracellular vitamin B12 metabolism, mediates the transport of cobalamin (Cbl) into mitochondria for the final steps of adenosylcobalamin (AdoCbl) synthesis. Functions as a G-protein chaperone that assists AdoCbl cofactor delivery from MMAB to the methylmalonyl-CoA mutase (MMUT). Plays a dual role as both a protectase and a reactivase for MMUT. Protects MMUT from progressive inactivation by oxidation by decreasing the rate of the formation of the oxidized inactive cofactor hydroxocobalamin (OH2Cbl). Additionally acts a reactivase by promoting the replacement of OH2Cbl by the active cofactor AdoCbl, restoring the activity of MMUT in the presence and hydrolysis of GTP. The protein is Methylmalonic aciduria type A homolog, mitochondrial of Mus musculus (Mouse).